A 184-amino-acid chain; its full sequence is Elongation factor P (184 aa).

It belongs to the elongation factor P family.

The protein resides in the cytoplasm. It participates in protein biosynthesis; polypeptide chain elongation. Functionally, involved in peptide bond synthesis. Stimulates efficient translation and peptide-bond synthesis on native or reconstituted 70S ribosomes in vitro. Probably functions indirectly by altering the affinity of the ribosome for aminoacyl-tRNA, thus increasing their reactivity as acceptors for peptidyl transferase. The sequence is that of Elongation factor P from Leptothrix cholodnii (strain ATCC 51168 / LMG 8142 / SP-6) (Leptothrix discophora (strain SP-6)).